A 904-amino-acid polypeptide reads, in one-letter code: MSQQTTIRKLAELVNTPVDKLLVQLAEAGMKFSGPDQVVTSTEKMKLLGFLRRTHGKAETSAEAASEAAKKITLNRRKLQEVTVNAGRTKTTVNVEVRQKRTYVKSENEGGGRAAPMTPDEERADILRKLEESRQRNLEEQQRLAESDRVRDEAIQRKREEEQAAKDRAEAERKAAEEAAAAASAPAPVADAPKPSAAAPAARLPSSPSSAPRAARPAGASPASRPAAPARADDRSNAAKHKTRGSHVMVAGVEDDDATKRFAGQLHLSAADRARRSNVRGKPTGRPGSSSSRRGNDSGRGGSQANSGPHGFERPTAPVVREVAIGETITVADLAQKLALKGGDVVKALFKMGVMATITQSIDHDTAALVTEELGHKAVRADNADFEDALLAHAEDAQGEATSRPPVVTIMGHVDHGKTSLLDYIRRTKIASGEAGGITQHIGAYHVETGRGVISFLDTPGHAAFTSMRARGAKITDIVVLVVAADDGVMPQTKEAVAHAKAAGVPLIVAVNKIDKTGADPLRVKNELLAENVVAEEFGGDTQFIEVSAKLGTGVDTLLDAISLQAEVLELKAVAEGRASGTVIESSLDKGRGPVATVLVQQGALKRGDYLVCGIQYGRVRALFDETGHQPASAGPSIPVQVLGLSGVPEAGDDFVVVDDERLAKDVAQQRETKRRESRLVASATNRMEDILAQMGKGEGQQVLNLVIKADVQGSVEALKQSLVALSNEDIRINVIHSGVGGITESDANSAAASKATIIGFNVRADASARKIVESNGIDLRYFSIIYDVIDQVKQVASGLLGVEIREEIIGIAQVRDVFRSSKFGAVAGCMVIEGVVKRSKPIRVLRDSVVVFEGELESLRRFKENVDEVRNGTECGIGVKAYNDVKAGDQIECFERIEVARTL.

3 disordered regions span residues 102 to 122, 134 to 252, and 267 to 316; these read TYVKSENEGGGRAAPMTPDEE, RQRN…MVAG, and HLSA…ERPT. Over residues 134-177 the composition is skewed to basic and acidic residues; it reads RQRNLEEQQRLAESDRVRDEAIQRKREEEQAAKDRAEAERKAAE. Residues 178 to 230 are compositionally biased toward low complexity; sequence EAAAAASAPAPVADAPKPSAAAPAARLPSSPSSAPRAARPAGASPASRPAAPA. The tr-type G domain maps to 403–572; the sequence is SRPPVVTIMG…SLQAEVLELK (170 aa). The tract at residues 412-419 is G1; the sequence is GHVDHGKT. GTP is bound at residue 412–419; the sequence is GHVDHGKT. Positions 437–441 are G2; sequence GITQH. The G3 stretch occupies residues 458 to 461; the sequence is DTPG. Residues 458–462 and 512–515 contribute to the GTP site; these read DTPGH and NKID. Residues 512 to 515 are G4; it reads NKID. The segment at 548–550 is G5; it reads SAK.

Belongs to the TRAFAC class translation factor GTPase superfamily. Classic translation factor GTPase family. IF-2 subfamily.

The protein resides in the cytoplasm. In terms of biological role, one of the essential components for the initiation of protein synthesis. Protects formylmethionyl-tRNA from spontaneous hydrolysis and promotes its binding to the 30S ribosomal subunits. Also involved in the hydrolysis of GTP during the formation of the 70S ribosomal complex. The polypeptide is Translation initiation factor IF-2 (Xanthomonas axonopodis pv. citri (strain 306)).